We begin with the raw amino-acid sequence, 194 residues long: dTTP/UTP pyrophosphatase (194 aa).

D69 (proton acceptor) is an active-site residue.

Belongs to the Maf family. YhdE subfamily. A divalent metal cation is required as a cofactor.

The protein localises to the cytoplasm. The enzyme catalyses dTTP + H2O = dTMP + diphosphate + H(+). It catalyses the reaction UTP + H2O = UMP + diphosphate + H(+). Nucleoside triphosphate pyrophosphatase that hydrolyzes dTTP and UTP. May have a dual role in cell division arrest and in preventing the incorporation of modified nucleotides into cellular nucleic acids. This is dTTP/UTP pyrophosphatase from Moorella thermoacetica (strain ATCC 39073 / JCM 9320).